The chain runs to 149 residues: MQVILLDKVVHLGNIGDQVNVKSGFARNFLIPQGKAVMATKANIEYFEARRAELEAKAAEVLAAAQARAAKLAELGSVTIASKAGDEGRLFGSITTRDVADAVTAAGVEVAKSEVRLSTGPIRTLGDHEVKFQLHGEVFATINVIVVAE.

It belongs to the bacterial ribosomal protein bL9 family.

Binds to the 23S rRNA. This is Large ribosomal subunit protein bL9 from Pasteurella multocida (strain Pm70).